The primary structure comprises 415 residues: Squalene synthase 10 (415 aa).

Helical transmembrane passes span 281 to 301 (AIFRFCAIPQIMAIGTLALCF) and 392 to 412 (LIVILFIILAILYAYLSSNLP).

Belongs to the phytoene/squalene synthase family. The cofactor is Mg(2+). Requires Mn(2+) as cofactor.

The protein localises to the endoplasmic reticulum membrane. It carries out the reaction 2 (2E,6E)-farnesyl diphosphate + NADH + H(+) = squalene + 2 diphosphate + NAD(+). It catalyses the reaction 2 (2E,6E)-farnesyl diphosphate + NADPH + H(+) = squalene + 2 diphosphate + NADP(+). It participates in terpene metabolism; lanosterol biosynthesis; lanosterol from farnesyl diphosphate: step 1/3. Functionally, component of the triterpene saponins (e.g. ginsenosides or panaxosides) and phytosterols biosynthetic pathways. Catalyzes the biosynthesis of squalene. The protein is Squalene synthase 10 of Panax ginseng (Korean ginseng).